The primary structure comprises 70 residues: uncharacterized protein (70 aa).

This is an uncharacterized protein from Torque teno tamarin virus (isolate So-TTV2).